The chain runs to 270 residues: Tryptophan synthase alpha chain (270 aa).

Residues E49 and D60 each act as proton acceptor in the active site.

Belongs to the TrpA family. As to quaternary structure, tetramer of two alpha and two beta chains.

The enzyme catalyses (1S,2R)-1-C-(indol-3-yl)glycerol 3-phosphate + L-serine = D-glyceraldehyde 3-phosphate + L-tryptophan + H2O. Its pathway is amino-acid biosynthesis; L-tryptophan biosynthesis; L-tryptophan from chorismate: step 5/5. Functionally, the alpha subunit is responsible for the aldol cleavage of indoleglycerol phosphate to indole and glyceraldehyde 3-phosphate. The polypeptide is Tryptophan synthase alpha chain (Buchnera aphidicola subsp. Diuraphis noxia).